Reading from the N-terminus, the 382-residue chain is Alkanesulfonate monooxygenase (382 aa).

Belongs to the SsuD family.

The enzyme catalyses an alkanesulfonate + FMNH2 + O2 = an aldehyde + FMN + sulfite + H2O + 2 H(+). In terms of biological role, catalyzes the desulfonation of aliphatic sulfonates. The polypeptide is Alkanesulfonate monooxygenase (Pseudomonas sp).